The sequence spans 124 residues: Large ribosomal subunit protein eL31 (124 aa).

This sequence belongs to the eukaryotic ribosomal protein eL31 family. Component of the large ribosomal subunit.

It localises to the cytoplasm. Component of the large ribosomal subunit. The ribosome is a large ribonucleoprotein complex responsible for the synthesis of proteins in the cell. This chain is Large ribosomal subunit protein eL31 (rpl31), found in Paralichthys olivaceus (Bastard halibut).